Consider the following 137-residue polypeptide: Large ribosomal subunit protein uL16 (137 aa).

Belongs to the universal ribosomal protein uL16 family. Part of the 50S ribosomal subunit.

Binds 23S rRNA and is also seen to make contacts with the A and possibly P site tRNAs. This chain is Large ribosomal subunit protein uL16, found in Pseudomonas putida (strain ATCC 47054 / DSM 6125 / CFBP 8728 / NCIMB 11950 / KT2440).